A 96-amino-acid polypeptide reads, in one-letter code: RxLR effector protein PITG_11507 (96 aa).

The N-terminal stretch at 1 to 19 (MRLSFIIVAVSLLAGGSGA) is a signal peptide. Residues 27-59 (SDVLTSRGTNEGARTGKRSLRYDSNVERTGEED) form a disordered region. Positions 44–59 (RSLRYDSNVERTGEED) match the RxLR-dEER motif. The segment covering 46–55 (LRYDSNVERT) has biased composition (basic and acidic residues).

It belongs to the RxLR effector family.

Its subcellular location is the secreted. It is found in the host nucleus. The protein resides in the host cytoplasm. Effector that enhances P.infestans colonization of Nicotiana benthamiana leaves. The polypeptide is RxLR effector protein PITG_11507 (Phytophthora infestans (strain T30-4) (Potato late blight agent)).